Here is a 306-residue protein sequence, read N- to C-terminus: Acetyl-coenzyme A carboxylase carboxyl transferase subunit beta (306 aa).

The region spanning 25–294 (LWIKDPTSGE…VVNPSNTSST (270 aa)) is the CoA carboxyltransferase N-terminal domain. Residues 287–296 (NPSNTSSTNS) are compositionally biased toward low complexity. Residues 287-306 (NPSNTSSTNSQASLSKAEAA) form a disordered region.

Belongs to the AccD/PCCB family. As to quaternary structure, acetyl-CoA carboxylase is a heterohexamer composed of biotin carboxyl carrier protein (AccB), biotin carboxylase (AccC) and two subunits each of ACCase subunit alpha (AccA) and ACCase subunit beta (AccD).

It localises to the cytoplasm. It carries out the reaction N(6)-carboxybiotinyl-L-lysyl-[protein] + acetyl-CoA = N(6)-biotinyl-L-lysyl-[protein] + malonyl-CoA. It participates in lipid metabolism; malonyl-CoA biosynthesis; malonyl-CoA from acetyl-CoA: step 1/1. Its function is as follows. Component of the acetyl coenzyme A carboxylase (ACC) complex. Biotin carboxylase (BC) catalyzes the carboxylation of biotin on its carrier protein (BCCP) and then the CO(2) group is transferred by the transcarboxylase to acetyl-CoA to form malonyl-CoA. The protein is Acetyl-coenzyme A carboxylase carboxyl transferase subunit beta of Bartonella henselae (strain ATCC 49882 / DSM 28221 / CCUG 30454 / Houston 1) (Rochalimaea henselae).